The chain runs to 213 residues: Riboflavin synthase (213 aa).

Lumazine-binding repeat units follow at residues 1-97 (MFTG…IGGH) and 98-195 (LMSG…VDTV). 2,4-dihydroxypteridine contacts are provided by residues 4 to 6 (GIV), 48 to 50 (CLT), 62 to 67 (DLMKET), 101 to 103 (GHI), Lys137, 146 to 148 (SLT), and 160 to 165 (HLIPET).

In terms of assembly, homotrimer. Unlike in B.subtilis, does not interact with 6,7-dimethyl-8-ribityllumazine synthase.

The catalysed reaction is 2 6,7-dimethyl-8-(1-D-ribityl)lumazine + H(+) = 5-amino-6-(D-ribitylamino)uracil + riboflavin. It functions in the pathway cofactor biosynthesis; riboflavin biosynthesis; riboflavin from 2-hydroxy-3-oxobutyl phosphate and 5-amino-6-(D-ribitylamino)uracil: step 2/2. Catalyzes the dismutation of two molecules of 6,7-dimethyl-8-ribityllumazine, resulting in the formation of riboflavin and 5-amino-6-(D-ribitylamino)uracil. In Escherichia coli (strain K12), this protein is Riboflavin synthase (ribC).